The primary structure comprises 143 residues: MAKKIVGFIKLQVPAGKANPSPPIGPALGQRGLNIMEFCKAFNAQTQSVEPGLPLPVVITAFADKSFTFIIKTPPAITLIKKAIKLDKGSARPHTDKVGKITRAQLEEIAKTKMKDLTAADLDAAVRTIAGSARSMGVNVEGV.

It belongs to the universal ribosomal protein uL11 family. Part of the ribosomal stalk of the 50S ribosomal subunit. Interacts with L10 and the large rRNA to form the base of the stalk. L10 forms an elongated spine to which L12 dimers bind in a sequential fashion forming a multimeric L10(L12)X complex. In terms of processing, one or more lysine residues are methylated.

Functionally, forms part of the ribosomal stalk which helps the ribosome interact with GTP-bound translation factors. This Variovorax paradoxus (strain S110) protein is Large ribosomal subunit protein uL11.